The following is a 241-amino-acid chain: Geranylgeranylglyceryl phosphate synthase (241 aa).

Positions 19 and 46 each coordinate Mg(2+). Sn-glycerol 1-phosphate is bound by residues Y167–G173, G198–G199, and G220–T221.

It belongs to the GGGP/HepGP synthase family. Group II subfamily. Mg(2+) serves as cofactor.

The protein resides in the cytoplasm. It catalyses the reaction sn-glycerol 1-phosphate + (2E,6E,10E)-geranylgeranyl diphosphate = sn-3-O-(geranylgeranyl)glycerol 1-phosphate + diphosphate. Its pathway is membrane lipid metabolism; glycerophospholipid metabolism. In terms of biological role, prenyltransferase that catalyzes the transfer of the geranylgeranyl moiety of geranylgeranyl diphosphate (GGPP) to the C3 hydroxyl of sn-glycerol-1-phosphate (G1P). This reaction is the first ether-bond-formation step in the biosynthesis of archaeal membrane lipids. The protein is Geranylgeranylglyceryl phosphate synthase of Pyrobaculum calidifontis (strain DSM 21063 / JCM 11548 / VA1).